Reading from the N-terminus, the 339-residue chain is Anthranilate phosphoribosyltransferase (339 aa).

5-phospho-alpha-D-ribose 1-diphosphate contacts are provided by residues Gly82, 85–86 (GD), Thr90, 92–95 (NIST), and 110–118 (KHGNRAVSS). Anthranilate is bound at residue Gly82. Ser94 lines the Mg(2+) pocket. Residues Asn113 and Arg168 each coordinate anthranilate. 2 residues coordinate Mg(2+): Asp227 and Glu228.

It belongs to the anthranilate phosphoribosyltransferase family. Homodimer. Mg(2+) serves as cofactor.

It catalyses the reaction N-(5-phospho-beta-D-ribosyl)anthranilate + diphosphate = 5-phospho-alpha-D-ribose 1-diphosphate + anthranilate. It participates in amino-acid biosynthesis; L-tryptophan biosynthesis; L-tryptophan from chorismate: step 2/5. Functionally, catalyzes the transfer of the phosphoribosyl group of 5-phosphorylribose-1-pyrophosphate (PRPP) to anthranilate to yield N-(5'-phosphoribosyl)-anthranilate (PRA). The sequence is that of Anthranilate phosphoribosyltransferase from Clostridium beijerinckii (strain ATCC 51743 / NCIMB 8052) (Clostridium acetobutylicum).